The primary structure comprises 63 residues: Cecropin-1/3 (63 aa).

A signal peptide spans 1 to 23 (MNFYKVFIFVALILAISLGQSEA). Arginine 62 is subject to Arginine amide.

Belongs to the cecropin family.

It localises to the secreted. In terms of biological role, cecropins have lytic and antibacterial activity against several Gram-positive and Gram-negative bacteria. This chain is Cecropin-1/3 (Cec1), found in Drosophila virilis (Fruit fly).